The sequence spans 181 residues: Inorganic pyrophosphatase 2 (181 aa).

Lys30, Arg44, and Tyr56 together coordinate substrate. The Mg(2+) site is built by Asp66, Asp71, and Asp103. Substrate is bound at residue Tyr142.

It belongs to the PPase family. In terms of assembly, homohexamer. Mg(2+) serves as cofactor.

The protein resides in the cytoplasm. It catalyses the reaction diphosphate + H2O = 2 phosphate + H(+). Its function is as follows. Catalyzes the hydrolysis of inorganic pyrophosphate (PPi) forming two phosphate ions. This chain is Inorganic pyrophosphatase 2, found in Pseudomonas syringae pv. tomato (strain ATCC BAA-871 / DC3000).